A 494-amino-acid chain; its full sequence is DEAD-box ATP-dependent RNA helicase 20 (494 aa).

The segment covering 1 to 20 has biased composition (basic and acidic residues); the sequence is MSRFDGRAADPGSYRDRRSE. The disordered stretch occupies residues 1–39; sequence MSRFDGRAADPGSYRDRRSEGAFGGGTRAFAPTSKADSA. Positions 29-39 are enriched in low complexity; it reads AFAPTSKADSA. Positions 91 to 119 match the Q motif motif; the sequence is REFRDVGFPEYVLQEITKAGFVEPTPIQS. The Helicase ATP-binding domain maps to 122-297; the sequence is WPMALRGRDL…RNFLFDPYKV (176 aa). 135–142 contacts ATP; that stretch reads AETGSGKT. The DEAD box signature appears at 245-248; it reads DEAD. Positions 325-470 constitute a Helicase C-terminal domain; the sequence is KLVNLLEDIM…KVSPELANMG (146 aa). The tract at residues 465 to 494 is disordered; sequence ELANMGRGAPPPSSGHRDRYRGYGGGRSWS.

Belongs to the DEAD box helicase family. DDX5/DBP2 subfamily.

It is found in the nucleus. The catalysed reaction is ATP + H2O = ADP + phosphate + H(+). Functionally, ATP-dependent RNA helicase involved nonsense-mediated mRNA decay and ribosome biogenesis through rRNA processing. The sequence is that of DEAD-box ATP-dependent RNA helicase 20 from Oryza sativa subsp. japonica (Rice).